Consider the following 181-residue polypeptide: Protein Syd (181 aa).

The protein belongs to the Syd family.

The protein resides in the cell inner membrane. Its function is as follows. Interacts with the SecY protein in vivo. May bind preferentially to an uncomplexed state of SecY, thus functioning either as a chelating agent for excess SecY in the cell or as a regulatory factor that negatively controls the translocase function. This chain is Protein Syd, found in Salmonella agona (strain SL483).